We begin with the raw amino-acid sequence, 691 residues long: Protein phosphatase Slingshot homolog (691 aa).

Residues 236-291 form the DEK-C domain; sequence EETERIIKLKLRDILRESDLENITSKEVRSALEQHTLCALQDYKEFIDNEMIIILA. The 142-residue stretch at 295–436 folds into the Tyrosine-protein phosphatase domain; sequence RPSEIFPYLY…LQTYQGILGA (142 aa). Residue C380 is the Phosphocysteine intermediate of the active site. Positions 532-580 form a coiled coil; the sequence is NEHVLSKEQIIQEEKKVMELEKGPEWVVKNNVLEEMKETEERELPNFEL. Positions 585 to 620 are disordered; that stretch reads NQSRERDQETIKESSVITQGSSSLDEVFESSTPTRS. Over residues 587–596 the composition is skewed to basic and acidic residues; it reads SRERDQETIK. Positions 597-619 are enriched in polar residues; it reads ESSVITQGSSSLDEVFESSTPTR.

Belongs to the protein-tyrosine phosphatase family. As to quaternary structure, interacts with actin and this stimulates phosphatase activity.

The protein localises to the cytoplasm. It is found in the cytoskeleton. Its subcellular location is the cleavage furrow. The protein resides in the midbody. It carries out the reaction O-phospho-L-tyrosyl-[protein] + H2O = L-tyrosyl-[protein] + phosphate. It catalyses the reaction O-phospho-L-seryl-[protein] + H2O = L-seryl-[protein] + phosphate. The enzyme catalyses O-phospho-L-threonyl-[protein] + H2O = L-threonyl-[protein] + phosphate. Its function is as follows. Protein phosphatase which regulates actin filament dynamics. Dephosphorylates and activates the actin binding/depolymerizing factor cofilin, which subsequently binds to actin filaments and stimulates their disassembly. Required for completion of the gastrulation movement and for cytokinesis. This chain is Protein phosphatase Slingshot homolog (ssh), found in Xenopus laevis (African clawed frog).